The following is a 197-amino-acid chain: dITP/XTP pyrophosphatase (197 aa).

9–14 (SNNAGK) is a substrate binding site. The active-site Proton acceptor is the D70. D70 serves as a coordination point for Mg(2+). Residues S71, 153–156 (FGYD), K176, and 181–182 (HR) each bind substrate.

It belongs to the HAM1 NTPase family. Homodimer. It depends on Mg(2+) as a cofactor.

It catalyses the reaction XTP + H2O = XMP + diphosphate + H(+). The catalysed reaction is dITP + H2O = dIMP + diphosphate + H(+). It carries out the reaction ITP + H2O = IMP + diphosphate + H(+). Pyrophosphatase that catalyzes the hydrolysis of nucleoside triphosphates to their monophosphate derivatives, with a high preference for the non-canonical purine nucleotides XTP (xanthosine triphosphate), dITP (deoxyinosine triphosphate) and ITP. Seems to function as a house-cleaning enzyme that removes non-canonical purine nucleotides from the nucleotide pool, thus preventing their incorporation into DNA/RNA and avoiding chromosomal lesions. The polypeptide is dITP/XTP pyrophosphatase (Chromobacterium violaceum (strain ATCC 12472 / DSM 30191 / JCM 1249 / CCUG 213 / NBRC 12614 / NCIMB 9131 / NCTC 9757 / MK)).